The sequence spans 315 residues: Ribosomal RNA small subunit methyltransferase H (315 aa).

Residues 34–36 (GGH), Asp-53, Asp-100, and His-107 each bind S-adenosyl-L-methionine.

Belongs to the methyltransferase superfamily. RsmH family.

Its subcellular location is the cytoplasm. It carries out the reaction cytidine(1402) in 16S rRNA + S-adenosyl-L-methionine = N(4)-methylcytidine(1402) in 16S rRNA + S-adenosyl-L-homocysteine + H(+). In terms of biological role, specifically methylates the N4 position of cytidine in position 1402 (C1402) of 16S rRNA. This Treponema denticola (strain ATCC 35405 / DSM 14222 / CIP 103919 / JCM 8153 / KCTC 15104) protein is Ribosomal RNA small subunit methyltransferase H.